The primary structure comprises 577 residues: MRRTKGRTDSPDVQSLNINADYGEAASLTADDSTAHKSDKKHDPEAKKQVTITVQPGVKPKPTVKKRSTPSADLDIHKEIQKCREEGATRLDLSKAAVTVLPKELKELTSLRELYLYGNRIAVLPPEVGLLPNLETLALSENNLTTLPDNLVKLTKLKVLDLRHNKIKEIPDVIYKLTTLTTLYLRFNRISVVESGIGNLKLLERLSLRENKIKILPRVIGQLVHLVTLDISHNHIENLPAEIGNCVHMTSLDLQHNDIPSLPDSIGRLTAMTRLGLRYNQLSSLPDSLANCSGIDEFNIEGNNIAELPEKLLSSLKNLTSLTLSRNKFEVFPAGPPKQFCQVNTFIMEHNRMQKIPFGVFNKAKYLSKLNVKDNQLTSLPLDFGSWISLVELNVATNQISKLPEDIQWLVNLEVLILSNNLLKKLPRGIGALRKLRVLDIEENKLESIPTEIEYLRSLERLVLQSNCLGSLPRSIGYLSSVTYLSVGENELVSVPQEIGNMESLEQLYLNDNENLQSLPYELVLCGSLQIMSIENCPLSALPSQIVAGGPSLVIQYLRLQGPYNGMVDTGVPTSDV.

Basic and acidic residues-rich tracts occupy residues 1 to 10 (MRRTKGRTDS) and 33 to 48 (STAH…EAKK). Positions 1–71 (MRRTKGRTDS…PTVKKRSTPS (71 aa)) are disordered. LRR repeat units follow at residues 87-109 (GATR…KELT), 110-131 (SLRE…VGLL), 133-155 (NLET…VKLT), 156-177 (KLKV…IYKL), 179-201 (TLTT…GNLK), 202-223 (LLER…IGQL), 225-246 (HLVT…IGNC), 248-269 (HMTS…IGRL), 271-292 (AMTR…LANC), 294-315 (GIDE…LLSS), 318-339 (NLTS…PPKQ), 342-363 (QVNT…VFNK), 366-387 (YLSK…FGSW), 389-410 (SLVE…IQWL), 412-434 (NLEV…GALR), 435-456 (KLRV…IEYL), 458-479 (SLER…IGYL), 481-502 (SVTY…IGNM), 504-526 (SLEQ…LVLC), and 528-549 (SLQI…IVAG).

It belongs to the SHOC2 family.

Acts as a Ras effector and participates in MAPK pathway activation. Probably acts as a scaffolding protein in a protein phosphatase complex that specifically dephosphorylates Raf kinase and stimulate Raf activity at specialized signaling complexes upon Ras activation. The chain is Leucine-rich repeat protein soc-2 homolog from Nematostella vectensis (Starlet sea anemone).